We begin with the raw amino-acid sequence, 157 residues long: uncharacterized protein (157 aa).

K115 is covalently cross-linked (Isoglutamyl lysine isopeptide (Lys-Gln) (interchain with Q-Cter in protein Pup)).

This is an uncharacterized protein from Mycolicibacterium smegmatis (strain ATCC 700084 / mc(2)155) (Mycobacterium smegmatis).